The primary structure comprises 192 residues: Fe/S biogenesis protein NfuA (192 aa).

2 residues coordinate [4Fe-4S] cluster: C149 and C152.

It belongs to the NfuA family. In terms of assembly, homodimer. [4Fe-4S] cluster serves as cofactor.

Involved in iron-sulfur cluster biogenesis. Binds a 4Fe-4S cluster, can transfer this cluster to apoproteins, and thereby intervenes in the maturation of Fe/S proteins. Could also act as a scaffold/chaperone for damaged Fe/S proteins. The polypeptide is Fe/S biogenesis protein NfuA (Shewanella frigidimarina (strain NCIMB 400)).